The following is a 128-amino-acid chain: Early E3 14.5 kDa protein (128 aa).

This sequence belongs to the adenoviridae E3_15 family.

Functionally, protects virus-infected cells from TNF-induced cytolysis. This Human adenovirus C serotype 5 (HAdV-5) protein is Early E3 14.5 kDa protein.